A 440-amino-acid chain; its full sequence is 3-phosphoshikimate 1-carboxyvinyltransferase (440 aa).

Residues Lys25, Ser26, and Arg30 each contribute to the 3-phosphoshikimate site. Lys25 lines the phosphoenolpyruvate pocket. The phosphoenolpyruvate site is built by Gly96 and Arg124. The 3-phosphoshikimate site is built by Ser168, Gln169, Asp310, and Lys337. A phosphoenolpyruvate-binding site is contributed by Gln169. Catalysis depends on Asp310, which acts as the Proton acceptor. Residues Arg341, Arg382, and Lys409 each contribute to the phosphoenolpyruvate site.

The protein belongs to the EPSP synthase family. In terms of assembly, monomer.

It localises to the cytoplasm. It carries out the reaction 3-phosphoshikimate + phosphoenolpyruvate = 5-O-(1-carboxyvinyl)-3-phosphoshikimate + phosphate. It participates in metabolic intermediate biosynthesis; chorismate biosynthesis; chorismate from D-erythrose 4-phosphate and phosphoenolpyruvate: step 6/7. Catalyzes the transfer of the enolpyruvyl moiety of phosphoenolpyruvate (PEP) to the 5-hydroxyl of shikimate-3-phosphate (S3P) to produce enolpyruvyl shikimate-3-phosphate and inorganic phosphate. In Chlamydia trachomatis serovar A (strain ATCC VR-571B / DSM 19440 / HAR-13), this protein is 3-phosphoshikimate 1-carboxyvinyltransferase.